Reading from the N-terminus, the 58-residue chain is Small ribosomal subunit protein bS21 (58 aa).

It belongs to the bacterial ribosomal protein bS21 family.

This Staphylococcus saprophyticus subsp. saprophyticus (strain ATCC 15305 / DSM 20229 / NCIMB 8711 / NCTC 7292 / S-41) protein is Small ribosomal subunit protein bS21.